Here is a 355-residue protein sequence, read N- to C-terminus: UDP-3-O-acylglucosamine N-acyltransferase (355 aa).

The active-site Proton acceptor is His258.

Belongs to the transferase hexapeptide repeat family. LpxD subfamily. In terms of assembly, homotrimer.

The enzyme catalyses a UDP-3-O-[(3R)-3-hydroxyacyl]-alpha-D-glucosamine + a (3R)-hydroxyacyl-[ACP] = a UDP-2-N,3-O-bis[(3R)-3-hydroxyacyl]-alpha-D-glucosamine + holo-[ACP] + H(+). It participates in bacterial outer membrane biogenesis; LPS lipid A biosynthesis. In terms of biological role, catalyzes the N-acylation of UDP-3-O-acylglucosamine using 3-hydroxyacyl-ACP as the acyl donor. Is involved in the biosynthesis of lipid A, a phosphorylated glycolipid that anchors the lipopolysaccharide to the outer membrane of the cell. This is UDP-3-O-acylglucosamine N-acyltransferase from Agrobacterium fabrum (strain C58 / ATCC 33970) (Agrobacterium tumefaciens (strain C58)).